The primary structure comprises 363 residues: NAD(P)H-quinone oxidoreductase subunit 1, chloroplastic (363 aa).

The next 6 membrane-spanning stretches (helical) occupy residues 27–47 (IWLL…VLVI), 98–118 (FSIG…VIPF), 127–147 (LSIG…GLLM), 248–268 (YSGI…LVSS), 300–320 (VFGT…FLFI), and 336–356 (LLNL…LLTT).

It belongs to the complex I subunit 1 family. In terms of assembly, NDH is composed of at least 16 different subunits, 5 of which are encoded in the nucleus.

It localises to the plastid. The protein localises to the chloroplast thylakoid membrane. It catalyses the reaction a plastoquinone + NADH + (n+1) H(+)(in) = a plastoquinol + NAD(+) + n H(+)(out). The enzyme catalyses a plastoquinone + NADPH + (n+1) H(+)(in) = a plastoquinol + NADP(+) + n H(+)(out). In terms of biological role, NDH shuttles electrons from NAD(P)H:plastoquinone, via FMN and iron-sulfur (Fe-S) centers, to quinones in the photosynthetic chain and possibly in a chloroplast respiratory chain. The immediate electron acceptor for the enzyme in this species is believed to be plastoquinone. Couples the redox reaction to proton translocation, and thus conserves the redox energy in a proton gradient. This is NAD(P)H-quinone oxidoreductase subunit 1, chloroplastic from Platanus occidentalis (Sycamore).